The primary structure comprises 1297 residues: Insulin receptor-related protein (1297 aa).

The signal sequence occupies residues 1-26 (MAVPSLWPWGACLPVIFLSLGFGLDT). The N-linked (GlcNAc...) asparagine glycan is linked to asparagine 47. 9 cysteine pairs are disulfide-bonded: cysteine 214/cysteine 222, cysteine 216/cysteine 228, cysteine 229/cysteine 237, cysteine 233/cysteine 246, cysteine 249/cysteine 258, cysteine 262/cysteine 274, cysteine 280/cysteine 300, cysteine 304/cysteine 317, and cysteine 320/cysteine 324. N-linked (GlcNAc...) asparagine glycosylation occurs at asparagine 311. Asparagine 411, asparagine 492, asparagine 528, asparagine 616, and asparagine 634 each carry an N-linked (GlcNAc...) asparagine glycan. Fibronectin type-III domains are found at residues 483–603 (QTRT…TLPA) and 607–707 (VPQD…AQEA). Cysteine 657 and cysteine 864 are oxidised to a cystine. Disordered regions lie at residues 666-687 (SNND…ESDC) and 732-758 (SINK…GNSS). A compositionally biased stretch (acidic residues) spans 675–685 (EDGDPEAEMES). The Extracellular segment spans residues 747–921 (AAGPLRLGGN…PEEEDAGGLH (175 aa)). N-linked (GlcNAc...) asparagine glycosylation is found at asparagine 756, asparagine 885, and asparagine 898. A Fibronectin type-III 3 domain is found at 818–913 (IPGKVAWEAS…SVAFYILGPE (96 aa)). Residues 922-943 (VLLTATPVGLTLLIVLAALGFF) form a helical membrane-spanning segment. The Cytoplasmic segment spans residues 944–1297 (YGKKRNRTLY…CSPQNGGPGH (354 aa)). One can recognise a Protein kinase domain in the interval 979–1254 (ISIIRELGQG…SIQEELRPSF (276 aa)). ATP contacts are provided by residues 985–993 (LGQGSFGMV) and lysine 1013. The Proton acceptor role is filled by aspartate 1115. A phosphotyrosine; by autocatalysis mark is found at tyrosine 1145 and tyrosine 1146. The disordered stretch occupies residues 1267–1297 (GARGSLPTTDAEPDSSPTPRDCSPQNGGPGH). The segment covering 1281 to 1297 (SSPTPRDCSPQNGGPGH) has biased composition (polar residues).

This sequence belongs to the protein kinase superfamily. Tyr protein kinase family. Insulin receptor subfamily. As to quaternary structure, probable tetramer of 2 alpha and 2 beta chains linked by disulfide bonds. The alpha chains contribute to the formation of the ligand-binding domain, while the beta chains carry the kinase domain. In terms of processing, autophosphorylated on tyrosine residues between pH 7.9 and pH 10.5.

The protein localises to the membrane. The catalysed reaction is L-tyrosyl-[protein] + ATP = O-phospho-L-tyrosyl-[protein] + ADP + H(+). Functionally, receptor with tyrosine-protein kinase activity. Functions as a pH sensing receptor which is activated by increased extracellular pH. Activates an intracellular signaling pathway that involves IRS1 and AKT1/PKB. The sequence is that of Insulin receptor-related protein (INSRR) from Homo sapiens (Human).